A 303-amino-acid polypeptide reads, in one-letter code: Taste receptor type 2 member 13 (303 aa).

Residues Met-1–Ser-7 are Extracellular-facing. A helical membrane pass occupies residues Ile-8–Val-28. The Cytoplasmic portion of the chain corresponds to Leu-29–Arg-55. A helical transmembrane segment spans residues Ile-56–Phe-76. At Val-77–Met-85 the chain is on the extracellular side. A helical membrane pass occupies residues Ile-86–Phe-106. Topologically, residues Tyr-107–Lys-128 are cytoplasmic. A helical transmembrane segment spans residues Val-129–Asn-149. Residues Met-150–Thr-184 lie on the Extracellular side of the membrane. 2 N-linked (GlcNAc...) asparagine glycosylation sites follow: Asn-162 and Asn-166. The chain crosses the membrane as a helical span at residues Met-185–Leu-205. The Cytoplasmic portion of the chain corresponds to Gln-206–Lys-232. The chain crosses the membrane as a helical span at residues Ile-233–Ile-253. The Extracellular segment spans residues Ser-254 to Val-261. The chain crosses the membrane as a helical span at residues Ile-262–Ile-282. Residues Leu-283–Arg-303 lie on the Cytoplasmic side of the membrane.

This sequence belongs to the G-protein coupled receptor T2R family.

It is found in the membrane. Functionally, receptor that may play a role in the perception of bitterness and is gustducin-linked. May play a role in sensing the chemical composition of the gastrointestinal content. The activity of this receptor may stimulate alpha gustducin, mediate PLC-beta-2 activation and lead to the gating of TRPM5. The sequence is that of Taste receptor type 2 member 13 (TAS2R13) from Pan paniscus (Pygmy chimpanzee).